Consider the following 236-residue polypeptide: Small ribosomal subunit protein uS3 (236 aa).

The KH type-2 domain maps to 39-107 (IREFLTEELK…DTSLNIVEVR (69 aa)). A disordered region spans residues 214 to 236 (ASERRAVEGDNQGSSSNRRRENA).

This sequence belongs to the universal ribosomal protein uS3 family. In terms of assembly, part of the 30S ribosomal subunit. Forms a tight complex with proteins S10 and S14.

Functionally, binds the lower part of the 30S subunit head. Binds mRNA in the 70S ribosome, positioning it for translation. This Brucella suis (strain ATCC 23445 / NCTC 10510) protein is Small ribosomal subunit protein uS3.